A 471-amino-acid polypeptide reads, in one-letter code: Mitochondrial distribution and morphology protein 10 (471 aa).

Residues 429-455 (PSSFSSPSRAANSTPAGGGQSVGGGIS) are disordered. The span at 444-455 (AGGGQSVGGGIS) shows a compositional bias: gly residues.

It belongs to the MDM10 family. Component of the ER-mitochondria encounter structure (ERMES) or MDM complex, composed of mmm1, mdm10, mdm12 and mdm34. Associates with the mitochondrial outer membrane sorting assembly machinery SAM(core) complex.

The protein localises to the mitochondrion outer membrane. Component of the ERMES/MDM complex, which serves as a molecular tether to connect the endoplasmic reticulum and mitochondria. Components of this complex are involved in the control of mitochondrial shape and protein biogenesis and may function in phospholipid exchange. mdm10 is involved in the late assembly steps of the general translocase of the mitochondrial outer membrane (TOM complex). Functions in the tom40-specific route of the assembly of outer membrane beta-barrel proteins, including the association of tom40 with the receptor tom22 and small TOM proteins. Can associate with the SAM(core) complex as well as the mdm12-mmm1 complex, both involved in late steps of the major beta-barrel assembly pathway, that is responsible for biogenesis of all outer membrane beta-barrel proteins. May act as a switch that shuttles between both complexes and channels precursor proteins into the tom40-specific pathway. Plays a role in mitochondrial morphology and in the inheritance of mitochondria. This is Mitochondrial distribution and morphology protein 10 (mdmB) from Aspergillus fumigatus (strain ATCC MYA-4609 / CBS 101355 / FGSC A1100 / Af293) (Neosartorya fumigata).